A 239-amino-acid chain; its full sequence is RNA polymerase sigma-E factor (239 aa).

A propeptide spans methionine 1 to isoleucine 29 (removed by SpoIIGA). Residues aspartate 86–valine 99 carry the Polymerase core binding motif. The H-T-H motif DNA-binding region spans glutamine 206 to lysine 225.

It belongs to the sigma-70 factor family. Proteolytically cleaved in the N-terminus by SpoIIGA to yield the active peptide.

Sigma factors are initiation factors that promote the attachment of RNA polymerase to specific initiation sites and are then released. This sigma factor is responsible for the expression of sporulation specific genes. This chain is RNA polymerase sigma-E factor (sigE), found in Bacillus subtilis (strain 168).